A 267-amino-acid polypeptide reads, in one-letter code: CD82 antigen (267 aa).

Topologically, residues Met1–Tyr11 are cytoplasmic. A lipid anchor (S-palmitoyl cysteine) is attached at Cys5. Residues Phe12–Val32 form a helical membrane-spanning segment. Residues Trp33–Arg53 lie on the Extracellular side of the membrane. Residues Met54 to Leu72 traverse the membrane as a helical segment. At Gly73–Cys83 the chain is on the cytoplasmic side. Cys74 carries S-palmitoyl cysteine lipidation. The chain crosses the membrane as a helical span at residues Leu84–Met110. At Gly111–Leu228 the chain is on the extracellular side. Residues Asn129, Asn157, and Asn198 are each glycosylated (N-linked (GlcNAc...) asparagine). A helical membrane pass occupies residues Gly229 to Ile250. At Cys251–Tyr267 the chain is on the cytoplasmic side.

The protein belongs to the tetraspanin (TM4SF) family. In terms of assembly, forms homooligomers. Interacts directly with IGSF8. Interacts with EGFR. Interacts with VEGFA and PDGFB. Interacts with ITGA4. Interacts with ITGA6; this interaction reduces ITGA6 cell surface expression. Interacts with ITGB1. Interacts with TLR4; this interaction inhibits TLR4-mediated signaling pathway. Interacts with TLR9. Interacts with PLAUR. Post-translationally, palmitoylated. Palmitoylation contributes to oligomerization and surface expression. In terms of tissue distribution, lymphoid specific.

Its subcellular location is the cell membrane. The protein resides in the cytoplasmic vesicle. It is found in the phagosome. Structural component of specialized membrane microdomains known as tetraspanin-enriched microdomains (TERMs), which act as platforms for receptor clustering and signaling. Participates thereby in diverse biological functions such as cell signal transduction, adhesion, migration and protein trafficking. Acts as a attenuator of EGF signaling, facilitating ligand-induced endocytosis of the receptor and its subsequent desensitization. Mechanistically, modulates ligand-induced ubiquitination and trafficking of EGFR via E3 ligase CBL phosphorylation by PKC. Increases cell-matrix adhesion by regulating the membrane organization of integrin alpha4/ITA4. Modulates adhesion and suppresses cell migration through other integrins such as the alpha6/ITGA6 and beta1/ITGB1. Decreases cell-associated plasminogen activation by interfering with the interaction between urokinase-type plasminogen activator/PLAU and its receptor PLAUR. Associates with CD4 or CD8 and delivers costimulatory signals for the TCR/CD3 pathway. Plays a role in TLR9 trafficking to acidified CpG-containing compartments by controlling interaction between TLR9 and VAMP3 and subsequent myddosome assembly. Inhibits LPS-induced inflammatory response by preventing binding of LPS to TLR4 on the cell surface. Plays a role in the activation of macrophages into anti-inflammatory phenotypes. Independently of Toll-like receptor (TLR) signaling, is recruited to pathogen-containing phagosomes prior to fusion with lysosomes and thereby participates in antigen presentation. Also acts to control angiogenesis and switch angiogenic milieu to quiescent state by binding and sequestering VEGFA and PDGFB to inhibit the signaling they trigger via their respective cell surface receptor. This Homo sapiens (Human) protein is CD82 antigen (CD82).